The sequence spans 229 residues: Sperm-associated microtubule inner protein 5 (229 aa).

Residues 181-201 are disordered; it reads PEFSGPGQTPPSEDPQAPRPC.

As to quaternary structure, microtubule inner protein component of sperm flagellar doublet microtubules. Expressed in testis (at protein level).

Its subcellular location is the cytoplasm. The protein localises to the cytoskeleton. It localises to the flagellum axoneme. The protein resides in the nucleus. Functionally, microtubule inner protein (MIP) part of the dynein-decorated doublet microtubules (DMTs) in flagellum axoneme. May serve to reinforce and thus stabilize the microtubule structure in the sperm flagella. The chain is Sperm-associated microtubule inner protein 5 (Spmip5) from Mus musculus (Mouse).